The primary structure comprises 69 residues: Pancreatic secretory trypsin inhibitor (69 aa).

One can recognise a Kazal-like domain in the interval 8–65 (TGTEAACSNYDLKKGCAKIFDPVCGTDNILYSNECLLCFQNLQRKTNVRIKRRGTCQE). 3 disulfide bridges follow: Cys14–Cys45, Cys23–Cys42, and Cys31–Cys63.

The protein localises to the secreted. Its function is as follows. This is a trypsin inhibitor, its physiological function is to prevent the trypsin-catalyzed premature activation of zymogens within the pancreas. This chain is Pancreatic secretory trypsin inhibitor (SPINK1), found in Struthio camelus (Common ostrich).